Consider the following 438-residue polypeptide: Trigger factor (438 aa).

One can recognise a PPIase FKBP-type domain in the interval 160–245 (DDKVVIDFVG…VKKIQEAQLP (86 aa)).

This sequence belongs to the FKBP-type PPIase family. Tig subfamily.

It localises to the cytoplasm. It catalyses the reaction [protein]-peptidylproline (omega=180) = [protein]-peptidylproline (omega=0). Functionally, involved in protein export. Acts as a chaperone by maintaining the newly synthesized protein in an open conformation. Functions as a peptidyl-prolyl cis-trans isomerase. In Francisella philomiragia subsp. philomiragia (strain ATCC 25017 / CCUG 19701 / FSC 153 / O#319-036), this protein is Trigger factor.